A 241-amino-acid polypeptide reads, in one-letter code: 1-(5-phosphoribosyl)-5-[(5-phosphoribosylamino)methylideneamino] imidazole-4-carboxamide isomerase (241 aa).

Catalysis depends on aspartate 8, which acts as the Proton acceptor. The active-site Proton donor is aspartate 130.

This sequence belongs to the HisA/HisF family.

Its subcellular location is the cytoplasm. It carries out the reaction 1-(5-phospho-beta-D-ribosyl)-5-[(5-phospho-beta-D-ribosylamino)methylideneamino]imidazole-4-carboxamide = 5-[(5-phospho-1-deoxy-D-ribulos-1-ylimino)methylamino]-1-(5-phospho-beta-D-ribosyl)imidazole-4-carboxamide. It functions in the pathway amino-acid biosynthesis; L-histidine biosynthesis; L-histidine from 5-phospho-alpha-D-ribose 1-diphosphate: step 4/9. This chain is 1-(5-phosphoribosyl)-5-[(5-phosphoribosylamino)methylideneamino] imidazole-4-carboxamide isomerase, found in Leptospira interrogans serogroup Icterohaemorrhagiae serovar copenhageni (strain Fiocruz L1-130).